Here is a 336-residue protein sequence, read N- to C-terminus: MAIPKVGINGFGRIGRIVLRNALVAKTIQVVAINDPFIDLEYMAYMFKYDSTHGRFDGSVEIKDGKLVIDGNAIDVHNERDPADIKWSTSGADYVIESTGVFTTQETASAHLKGGAKRVIISAPSKDAPMYVVGVNEEKFNPSEKVISNASCTTNCLAPLAKVINDTFGIEEGLMTTVHATTATQKTVDGPSKKDWRGGRGASANIIPSSTGAAKAVGKVIPALNGKLTGMAFRVPTPDVSVVDLTVKLAKPTNYEDIKAAIKAASEGPMKGVLGYTEDAVVSTDFCGDNHSSIFDASAGIQLSPQFVKLVSWYDNEWGYSRRVVDLVAYTAAKDN.

Residues 13–14 (RI) and D35 contribute to the NAD(+) site. A Phosphoserine modification is found at S59. An NAD(+)-binding site is contributed by R80. Residue S125 is modified to Phosphoserine. D-glyceraldehyde 3-phosphate contacts are provided by residues 151 to 153 (SCT), T182, 211 to 212 (TG), and R234. The active-site Nucleophile is C152. Residue N316 coordinates NAD(+).

This sequence belongs to the glyceraldehyde-3-phosphate dehydrogenase family. Homotetramer.

It is found in the cytoplasm. It catalyses the reaction D-glyceraldehyde 3-phosphate + phosphate + NAD(+) = (2R)-3-phospho-glyceroyl phosphate + NADH + H(+). Its pathway is carbohydrate degradation; glycolysis; pyruvate from D-glyceraldehyde 3-phosphate: step 1/5. The protein is Glyceraldehyde-3-phosphate dehydrogenase 1 (tdh1) of Schizosaccharomyces pombe (strain 972 / ATCC 24843) (Fission yeast).